Reading from the N-terminus, the 714-residue chain is Macrophage-expressed gene 1 protein (714 aa).

The first 19 residues, 1–19, serve as a signal peptide directing secretion; the sequence is MNSFMAIALIWMMIACAEA. Residues 30–345 form the MACPF domain; it reads GFQTCKDTLK…TAVRHYYTFN (316 aa). Cysteine 34 and cysteine 70 form a disulfide bridge. Beta stranded transmembrane passes span 113–120 and 127–132; these read FSINTELS and GKFSTE. Residue asparagine 185 is glycosylated (N-linked (GlcNAc...) asparagine). The next 2 beta stranded transmembrane spans lie at 235-244 and 248-256; these read TVTASAGIAF and VNFKVETDH. The N-linked (GlcNAc...) asparagine glycan is linked to asparagine 269. Cysteine 350 and cysteine 369 are oxidised to a cystine. The N-linked (GlcNAc...) asparagine glycan is linked to asparagine 375. Cystine bridges form between cysteine 385–cysteine 394, cysteine 432–cysteine 446, cysteine 436–cysteine 442, cysteine 531–cysteine 569, and cysteine 554–cysteine 574. A P2 region spans residues 410–653; sequence PSGYTPVHLL…GDGNGMSGGE (244 aa). A helical membrane pass occupies residues 654-674; it reads AAGVTLGVIIALGIVITLAIY. A disordered region spans residues 690-714; the sequence is EQESLVGSFATDASPPNGEQDPCPA.

Belongs to the MPEG1 family. In terms of assembly, homooligomer; predominantly forms a homooligomeric arc-shaped pore complex instead of complete rings of 16 subunits. Proteolytically processed in two steps to generate the Macrophage-expressed gene 1 protein, processed form: cleaved by trypsin in proximity of the helical transmembrane domain releases the ectodomain into the lysosomal lumen to orient the pore-forming domain toward the endogenous membranes, and processed by the asparagine endopeptidase (LGMN). Proteolytic processing in antigen-containing vesicles is pH-dependent. Post-translationally, monoubiquitinated in response to bacterial infection; ubiquitination is required for vesicular localization and antibacterial activity and can be blocked by bacterial cell cycle inhibiting factor (cif).

The protein localises to the cytoplasmic vesicle membrane. The protein resides in the cytoplasmic vesicle. It is found in the phagosome membrane. With respect to regulation, forms arc- and ring-shaped pre-pores on top of the membrane at neutral to slightly acidic pH conditions and converts to pores upon acidification. Undergoes transition from the pre-pore to the pore in a processive clockwise hand-over-hand process. In the pore state, 2 alpha-helical regions refold into transmembrane hairpins (TMH1 and TMH2) in each protomer that form in the ensemble complex giant beta-barrel transmembrane pores. Its function is as follows. Pore-forming protein involved in both innate and adaptive immunity. Plays a central role in antigen cross-presentation in dendritic cells by forming a pore in antigen-containing compartments, thereby promoting delivery of antigens for cross-presentation. Also involved in innate immune response following bacterial infection; shows antibacterial activity against a wide spectrum of Gram-positive, Gram-negative and acid-fast bacteria. Reduces the viability of the intracytosolic pathogen L.monocytogenes by inhibiting acidification of the phagocytic vacuole of host cells which restricts bacterial translocation from the vacuole to the cytosol. Required for the antibacterial activity of reactive oxygen species and nitric oxide. Pore-forming protein that plays a central role in antigen cross-presentation in dendritic cells by mediating delivery of antigens for cross-presentation. Dendritic cells bridge innate and adaptive immunity by capturing exogenous antigens on MHC class-I molecules and presenting them to naive CD8(+) T-cells. Acts by forming a pore in antigen-containing compartments, promoting the release of antigens into the cytosol, enabling generation of MHCI:peptide complexes and T-cell priming. The sequence is that of Macrophage-expressed gene 1 protein (Mpeg1) from Rattus norvegicus (Rat).